The chain runs to 448 residues: Putative RNA-ligase (448 aa).

It belongs to the asfivirus M448R family.

It is found in the virion. In African swine fever virus (isolate Pig/Kenya/KEN-50/1950) (ASFV), this protein is Putative RNA-ligase.